The chain runs to 304 residues: Acetylglutamate kinase (304 aa).

Substrate contacts are provided by residues 74–75, R96, and N201; that span reads GG.

It belongs to the acetylglutamate kinase family. ArgB subfamily.

Its subcellular location is the cytoplasm. It carries out the reaction N-acetyl-L-glutamate + ATP = N-acetyl-L-glutamyl 5-phosphate + ADP. The protein operates within amino-acid biosynthesis; L-arginine biosynthesis; N(2)-acetyl-L-ornithine from L-glutamate: step 2/4. Its function is as follows. Catalyzes the ATP-dependent phosphorylation of N-acetyl-L-glutamate. The protein is Acetylglutamate kinase of Alkalilimnicola ehrlichii (strain ATCC BAA-1101 / DSM 17681 / MLHE-1).